The primary structure comprises 316 residues: tRNA uridine(34) hydroxylase (316 aa).

One can recognise a Rhodanese domain in the interval 123 to 217 (LSDDTVVIDA…YGKDPETKGE (95 aa)). The Cysteine persulfide intermediate role is filled by Cys-177.

The protein belongs to the TrhO family.

The catalysed reaction is uridine(34) in tRNA + AH2 + O2 = 5-hydroxyuridine(34) in tRNA + A + H2O. Its function is as follows. Catalyzes oxygen-dependent 5-hydroxyuridine (ho5U) modification at position 34 in tRNAs. The protein is tRNA uridine(34) hydroxylase of Staphylococcus saprophyticus subsp. saprophyticus (strain ATCC 15305 / DSM 20229 / NCIMB 8711 / NCTC 7292 / S-41).